Reading from the N-terminus, the 187-residue chain is MNETQIQRETRQVVEDVLEKTNLKQGALFVLGLSSSEVLGGQIGKESSQEIGELIVETILGILGSRGIHLAVQGCEHVNRALVVERQVAEQFGLEIVSVHPTLHAGGSGQLAAFKFMQDPVEVEFIKAHAGLDIGDTAIGMHVKHVQVPIRPILREIGHAHVTALASRPKLIGGARAHYPQDAIRKT.

Belongs to the UPF0340 family.

This chain is UPF0340 protein SPJ_0612, found in Streptococcus pneumoniae (strain JJA).